Here is a 235-residue protein sequence, read N- to C-terminus: Serine protease SplA (235 aa).

The N-terminal stretch at 1 to 35 is a signal peptide; it reads MNENVMVKGLTALTILTSLGFAENISNQPHSIAKA. Residues H74, D113, and S189 each act as charge relay system in the active site.

This sequence belongs to the peptidase S1B family.

Its subcellular location is the secreted. In Staphylococcus aureus (strain MSSA476), this protein is Serine protease SplA (splA).